Reading from the N-terminus, the 560-residue chain is 2-succinyl-5-enolpyruvyl-6-hydroxy-3-cyclohexene-1-carboxylate synthase (560 aa).

Belongs to the TPP enzyme family. MenD subfamily. Homodimer. Requires Mg(2+) as cofactor. Mn(2+) is required as a cofactor. Thiamine diphosphate serves as cofactor.

The catalysed reaction is isochorismate + 2-oxoglutarate + H(+) = 5-enolpyruvoyl-6-hydroxy-2-succinyl-cyclohex-3-ene-1-carboxylate + CO2. It functions in the pathway quinol/quinone metabolism; 1,4-dihydroxy-2-naphthoate biosynthesis; 1,4-dihydroxy-2-naphthoate from chorismate: step 2/7. Its pathway is quinol/quinone metabolism; menaquinone biosynthesis. In terms of biological role, catalyzes the thiamine diphosphate-dependent decarboxylation of 2-oxoglutarate and the subsequent addition of the resulting succinic semialdehyde-thiamine pyrophosphate anion to isochorismate to yield 2-succinyl-5-enolpyruvyl-6-hydroxy-3-cyclohexene-1-carboxylate (SEPHCHC). The chain is 2-succinyl-5-enolpyruvyl-6-hydroxy-3-cyclohexene-1-carboxylate synthase from Staphylococcus saprophyticus subsp. saprophyticus (strain ATCC 15305 / DSM 20229 / NCIMB 8711 / NCTC 7292 / S-41).